We begin with the raw amino-acid sequence, 638 residues long: Carbon monoxide dehydrogenase (638 aa).

[4Fe-4S] cluster is bound by residues Cys-46, Cys-55, Cys-58, Cys-63, and Cys-74. Residues His-265, Cys-299, Cys-343, Cys-452, Cys-483, and Cys-524 each contribute to the [Ni-4Fe-5S] cluster site.

It belongs to the Ni-containing carbon monoxide dehydrogenase family. In terms of assembly, homodimer. The cofactor is [4Fe-4S] cluster. It depends on [Ni-4Fe-5S] cluster as a cofactor.

It catalyses the reaction CO + 2 oxidized [2Fe-2S]-[ferredoxin] + H2O = 2 reduced [2Fe-2S]-[ferredoxin] + CO2 + 2 H(+). In terms of biological role, CODH oxidizes carbon monoxide coupled, via CooF, to the reduction of a hydrogen cation by a hydrogenase (possibly CooH). This is Carbon monoxide dehydrogenase (cooS) from Methanopyrus kandleri (strain AV19 / DSM 6324 / JCM 9639 / NBRC 100938).